A 342-amino-acid polypeptide reads, in one-letter code: Homocysteine S-methyltransferase 4 (342 aa).

The Hcy-binding domain occupies 13 to 328 (ALRGFVREAG…ATVRAIARAV (316 aa)). Residues Cys-245, Cys-313, and Cys-314 each coordinate Zn(2+).

In terms of assembly, monomer. Requires Zn(2+) as cofactor.

It carries out the reaction S-methyl-L-methionine + L-homocysteine = 2 L-methionine + H(+). Its function is as follows. Catalyzes methyl transfer from S-methylmethionine (SMM) to adenosyl-L-homocysteine (AdoMet). SMM degradation (by HMT-1, HMT-2, HMT-3 and HMT-4) and biosynthesis (by MMT1) constitute the SMM cycle in plants, which is probably required to achieve short term control of AdoMet level. The protein is Homocysteine S-methyltransferase 4 (HMT-4) of Zea mays (Maize).